A 449-amino-acid chain; its full sequence is Bifunctional protein GlmU (449 aa).

The tract at residues 1 to 229 (MNHFAVILAA…FEETIGVNDR (229 aa)) is pyrophosphorylase. UDP-N-acetyl-alpha-D-glucosamine-binding positions include 8–11 (LAAG), Lys-22, Gln-72, and 77–78 (GT). Asp-102 is a Mg(2+) binding site. Gly-139, Glu-154, Asn-169, and Asn-227 together coordinate UDP-N-acetyl-alpha-D-glucosamine. Asn-227 lines the Mg(2+) pocket. The tract at residues 230–250 (VALAQAETSMRKRTNEHWMRQ) is linker. The segment at 251–449 (GVTFIDPAST…ERQTTKPDYR (199 aa)) is N-acetyltransferase. UDP-N-acetyl-alpha-D-glucosamine contacts are provided by Arg-332 and Lys-350. Catalysis depends on His-362, which acts as the Proton acceptor. UDP-N-acetyl-alpha-D-glucosamine-binding residues include Tyr-365 and Asn-376. Acetyl-CoA-binding positions include 385–386 (NY), Ala-422, and Arg-439.

This sequence in the N-terminal section; belongs to the N-acetylglucosamine-1-phosphate uridyltransferase family. In the C-terminal section; belongs to the transferase hexapeptide repeat family. As to quaternary structure, homotrimer. Requires Mg(2+) as cofactor.

The protein localises to the cytoplasm. The enzyme catalyses alpha-D-glucosamine 1-phosphate + acetyl-CoA = N-acetyl-alpha-D-glucosamine 1-phosphate + CoA + H(+). The catalysed reaction is N-acetyl-alpha-D-glucosamine 1-phosphate + UTP + H(+) = UDP-N-acetyl-alpha-D-glucosamine + diphosphate. It participates in nucleotide-sugar biosynthesis; UDP-N-acetyl-alpha-D-glucosamine biosynthesis; N-acetyl-alpha-D-glucosamine 1-phosphate from alpha-D-glucosamine 6-phosphate (route II): step 2/2. The protein operates within nucleotide-sugar biosynthesis; UDP-N-acetyl-alpha-D-glucosamine biosynthesis; UDP-N-acetyl-alpha-D-glucosamine from N-acetyl-alpha-D-glucosamine 1-phosphate: step 1/1. Its pathway is bacterial outer membrane biogenesis; LPS lipid A biosynthesis. Functionally, catalyzes the last two sequential reactions in the de novo biosynthetic pathway for UDP-N-acetylglucosamine (UDP-GlcNAc). The C-terminal domain catalyzes the transfer of acetyl group from acetyl coenzyme A to glucosamine-1-phosphate (GlcN-1-P) to produce N-acetylglucosamine-1-phosphate (GlcNAc-1-P), which is converted into UDP-GlcNAc by the transfer of uridine 5-monophosphate (from uridine 5-triphosphate), a reaction catalyzed by the N-terminal domain. The protein is Bifunctional protein GlmU of Exiguobacterium sibiricum (strain DSM 17290 / CCUG 55495 / CIP 109462 / JCM 13490 / 255-15).